The primary structure comprises 640 residues: tRNA-dihydrouridine(47) synthase [NAD(P)(+)]-like (640 aa).

Positions 1-10 (MAEVAEVAAE) are enriched in low complexity. Disordered regions lie at residues 1 to 22 (MAEV…VGAC) and 47 to 106 (DKQE…PHMK). Position 2 is an N-acetylalanine (Ala-2). Over residues 64 to 91 (PEAKRIRLEDGQENGKTEVAVESHERQV) the composition is skewed to basic and acidic residues. Over residues 92 to 106 (PKRARGQNKSRPHMK) the composition is skewed to basic residues. 2 consecutive C3H1-type zinc fingers follow at residues 110 to 140 (YDKE…HDVG) and 148 to 178 (ADLG…HLGP). Phosphoserine is present on Ser-267. Residues 301 to 303 (PLT) and Gln-355 each bind FMN. Cys-386 acts as the Proton donor in catalysis. Lys-406 participates in a covalent cross-link: Glycyl lysine isopeptide (Lys-Gly) (interchain with G-Cter in SUMO2). Residues Lys-425, His-455, 487–489 (NGD), and 510–511 (AR) contribute to the FMN site.

The protein belongs to the Dus family. Dus3 subfamily. The cofactor is FMN.

It catalyses the reaction 5,6-dihydrouridine(47) in tRNA + NAD(+) = uridine(47) in tRNA + NADH + H(+). It carries out the reaction 5,6-dihydrouridine(47) in tRNA + NADP(+) = uridine(47) in tRNA + NADPH + H(+). The enzyme catalyses a 5,6-dihydrouridine in mRNA + NAD(+) = a uridine in mRNA + NADH + H(+). The catalysed reaction is a 5,6-dihydrouridine in mRNA + NADP(+) = a uridine in mRNA + NADPH + H(+). Its function is as follows. Catalyzes the synthesis of dihydrouridine, a modified base, in various RNAs, such as tRNAs, mRNAs and some long non-coding RNAs (lncRNAs). Mainly modifies the uridine in position 47 (U47) in the D-loop of most cytoplasmic tRNAs. Also able to mediate the formation of dihydrouridine in some mRNAs, thereby regulating their translation. The protein is tRNA-dihydrouridine(47) synthase [NAD(P)(+)]-like of Rattus norvegicus (Rat).